Consider the following 532-residue polypeptide: Undecaprenyl-phosphate glucose phosphotransferase (532 aa).

Transmembrane regions (helical) follow at residues 81 to 101 (QVVV…CIAW), 110 to 130 (ELSG…FLFP), 155 to 175 (VAFG…PFGV), 183 to 203 (WLTF…YILH), and 344 to 364 (TASV…ALAI).

Belongs to the bacterial sugar transferase family.

The protein resides in the membrane. It catalyses the reaction di-trans,octa-cis-undecaprenyl phosphate + UDP-alpha-D-glucose = alpha-D-glucosyl di-trans,octa-cis-undecaprenyl diphosphate + UMP. Functionally, involved in the biosynthesis of the exopolysaccharide acetan, a water-soluble polysaccharide involved in production of bacterial cellulose (BC). The polypeptide is Undecaprenyl-phosphate glucose phosphotransferase (aceA) (Komagataeibacter xylinus (Gluconacetobacter xylinus)).